The following is a 146-amino-acid chain: Protein new-glue 3 (146 aa).

Residues 1–23 (MRYSCVLLLLATVACLLIPQTGG) form the signal peptide. Residues 23–146 (GSTATTTSTS…RRARSARRLS (124 aa)) are disordered. The span at 24-66 (STATTTSTSASATTTTSASATTTTASDTTTTTAATTTTSSSSS) shows a compositional bias: low complexity. A run of 4 repeats spans residues 31–38 (TSASATTT), 39–46 (TSASATTT), 47–53 (TASDTTT), and 54–61 (TTAATTTT). Positions 31–61 (TSASATTTTSASATTTTASDTTTTTAATTTT) are 4 X 8 AA approximate tandem repeats of T-S-A-S-A-T-T-T. Residues 67–92 (KSKKKKRTYHYTRHVYRPKRIRHIYR) show a composition bias toward basic residues. The span at 93-106 (HKADDDESSTDRTS) shows a compositional bias: basic and acidic residues. A compositionally biased stretch (low complexity) spans 116 to 132 (SSSSSSSGSTSSRSGNS). Residues 133 to 146 (RIRRRRARSARRLS) show a composition bias toward basic residues.

In terms of tissue distribution, salivary gland specific.

Its subcellular location is the secreted. The sequence is that of Protein new-glue 3 (ng3) from Drosophila melanogaster (Fruit fly).